We begin with the raw amino-acid sequence, 104 residues long: ESAT-6-like protein (104 aa).

Positions 12–43 (MAQAAQDIEQSANAIRGMQNQLASAKDQLRSH) form a coiled coil.

It belongs to the WXG100 family. CFP-10 subfamily. As to quaternary structure, in isolation forms a homodimer. Forms a tight 1:1 complex with EsxA. Forms a complex with EsxA and EccC, probably wholly mediated by EsxB; binds in a pocket in the third FtsK (ATPase) domain of EccC (residues 1163-1208).

It is found in the secreted. In terms of biological role, may help regulate assembly and function of the type VII secretion system (T7SS). Binds to EccC and induces its multimerization. May serve as a chaperone for EsxA. This is ESAT-6-like protein from Thermomonospora curvata (strain ATCC 19995 / DSM 43183 / JCM 3096 / KCTC 9072 / NBRC 15933 / NCIMB 10081 / Henssen B9).